A 240-amino-acid chain; its full sequence is Small ribosomal subunit protein uS2 (240 aa).

It belongs to the universal ribosomal protein uS2 family.

The sequence is that of Small ribosomal subunit protein uS2 from Wigglesworthia glossinidia brevipalpis.